A 526-amino-acid polypeptide reads, in one-letter code: Alpha-N-acetylgalactosaminide alpha-2,6-sialyltransferase 1 (526 aa).

The Cytoplasmic segment spans residues 1–12 (MTRYCRGLSQRQ). The chain crosses the membrane as a helical; Signal-anchor for type II membrane protein span at residues 13–33 (AFLLLTVLALLFILLFVVKDP). At 34–526 (RAKDSRCQFI…QRPQSDKAKN (493 aa)) the chain is on the lumenal side. The disordered stretch occupies residues 49 to 182 (SAQENQQKAE…TRRRQRLKAS (134 aa)). Over residues 81–106 (KDLKKQEREAVQGEQAEGKEKRKLET) the composition is skewed to basic and acidic residues. Over residues 161 to 171 (ATKSPASSPHP) the composition is skewed to polar residues. N-linked (GlcNAc...) asparagine glycans are attached at residues Asn-206, Asn-228, Asn-259, Asn-303, and Asn-388. Cystine bridges form between Cys-207/Cys-290 and Cys-293/Cys-461.

The protein belongs to the glycosyltransferase 29 family. Post-translationally, glycosylated; autosialylated. In terms of tissue distribution, submaxillary gland, mammary gland, spleen and colon.

The protein resides in the golgi apparatus membrane. It carries out the reaction a beta-D-galactosyl-(1-&gt;3)-N-acetyl-alpha-D-galactosaminyl derivative + CMP-N-acetyl-beta-neuraminate = a beta-D-galactosyl-(1-&gt;3)-[N-acetyl-alpha-neuraminyl-(2-&gt;6)]-N-acetyl-alpha-D-galactosaminyl derivative + CMP + H(+). The catalysed reaction is a 3-O-[N-acetyl-alpha-D-galactosaminyl]-L-seryl-[protein] + CMP-N-acetyl-beta-neuraminate = a 3-O-[N-acetyl-alpha-neuraminosyl-(2-&gt;6)-N-acetyl-alpha-D-galactosaminyl]-L-seryl-[protein] + CMP + H(+). The enzyme catalyses a 3-O-[N-acetyl-alpha-D-galactosaminyl]-L-threonyl-[protein] + CMP-N-acetyl-beta-neuraminate = a 3-O-[N-acetyl-alpha-neuraminosyl-(2-&gt;6)-N-acetyl-alpha-D-galactosaminyl]-L-threonyl-[protein] + CMP + H(+). It catalyses the reaction a 3-O-[beta-D-galactosyl-(1-&gt;3)-N-acetyl-alpha-D-galactosaminyl]-L-seryl-[protein] + CMP-N-acetyl-beta-neuraminate = a 3-O-{beta-D-galactosyl-(1-&gt;3)-[N-acetyl-alpha-neuraminosyl-(2-&gt;6)]-N-acetyl-alpha-D-galactosaminyl}-L-seryl-[protein] + CMP + H(+). It carries out the reaction a 3-O-[beta-D-galactosyl-(1-&gt;3)-N-acetyl-alpha-D-galactosaminyl]-L-threonyl-[protein] + CMP-N-acetyl-beta-neuraminate = a 3-O-{beta-D-galactosyl-(1-&gt;3)-[N-acetyl-alpha-neuraminosyl-(2-&gt;6)]-N-acetyl-alpha-D-galactosaminyl}-L-threonyl-[protein] + CMP + H(+). The catalysed reaction is a 3-O-[N-acetyl-alpha-neuraminyl-(2-&gt;3)-beta-D-galactosyl-(1-&gt;3)-N-acetyl-alpha-D-galactosaminyl]-L-threonyl-[protein] + CMP-N-acetyl-beta-neuraminate = a 3-O-{alpha-Neu5Ac-(2-&gt;3)-beta-D-Gal-(1-&gt;3)-[alpha-Neu5Ac-(2-&gt;6)]-alpha-D-GalNAc}-L-threonyl-[protein] + CMP + H(+). It participates in protein modification; protein glycosylation. Functionally, protein sialyltransferase specifically expressed in goblet cells that plays a key role in intestinal host-commensal homeostasis. Conjugates sialic acid with an alpha-2-6 linkage to N-acetylgalactosamine (GalNAc) glycan chains linked to serine or threonine in glycoproteins. Catalyzes the formation of the sialyl-Tn (S-Tn) antigen, an antigen found in intestinal goblet cells. Protein sialylation in globlet cells is essential for mucus integrity and is required to protect the intestinal mucus against excessive bacterial proteolytic degradation. This is Alpha-N-acetylgalactosaminide alpha-2,6-sialyltransferase 1 from Mus musculus (Mouse).